The sequence spans 677 residues: MTQVAKKILVTCALPYANGSIHLGHMLEHIQADVWVRYQRMRGHEVNFICADDAHGTPIMLKAQQLGITPEQMIGEMSQEHQTDFAGFNISYDNYHSTHSEENRQLSELIYSRLKENGFIKNRTISQLYDPEKGMFLPDRFVKGTCPKCKSPDQYGDNCEVCGATYSPTELIEPKSVVSGATPVMRDSEHFFFDLPSFSEMLQAWTRSGALQEQVANKMQEWFESGLQQWDISRDAPYFGFEIPNAPGKYFYVWLDAPIGYMGSFKNLCDKRGDSVSFDEYWKKDSTAELYHFIGKDIVYFHSLFWPAMLEGSNFRKPTNLFVHGYVTVNGAKMSKSRGTFIKASTWLNHFDADSLRYYYTAKLSSRIDDIDLNLEDFVQRVNADIVNKVVNLASRNAGFINKRFDGVLASELADPQLYKTFTDAAEVIGEAWESREFGKAVREIMALADLANRYVDEQAPWVVAKQEGRDADLQAICSMGINLFRVLMTYLKPVLPKLTERAEAFLNTELTWDGIQQPLLGHKVNPFKALYNRIDMKQVEALVEASKEEVKAAAAPVTGPLADDPIQETITFDDFAKVDLRVALIENAEFVEGSDKLLRLTLDLGGEKRNVFSGIRSAYPDPQALIGRHTIMVANLAPRKMRFGISEGMVMAAGPGGKDIFLLSPDAGAKPGHQVK.

The 'HIGH' region motif lies at 15–25 (PYANGSIHLGH). Zn(2+) contacts are provided by Cys146, Cys149, Cys159, and Cys162. Residues 333–337 (KMSKS) carry the 'KMSKS' region motif. Lys336 is a binding site for ATP. The 103-residue stretch at 575 to 677 (DFAKVDLRVA…AGAKPGHQVK (103 aa)) folds into the tRNA-binding domain.

The protein belongs to the class-I aminoacyl-tRNA synthetase family. MetG type 1 subfamily. As to quaternary structure, homodimer. Zn(2+) is required as a cofactor.

It localises to the cytoplasm. It catalyses the reaction tRNA(Met) + L-methionine + ATP = L-methionyl-tRNA(Met) + AMP + diphosphate. Is required not only for elongation of protein synthesis but also for the initiation of all mRNA translation through initiator tRNA(fMet) aminoacylation. The polypeptide is Methionine--tRNA ligase (Escherichia coli (strain SE11)).